The chain runs to 508 residues: Photosystem II CP47 reaction center protein (508 aa).

6 helical membrane passes run 21-36 (SVHI…WAGS), 101-115 (IVFS…IWHW), 140-156 (GIHL…FGAF), 203-218 (IAAG…FHLS), 237-252 (VLSS…AFVV), and 457-472 (SFAL…HGSR).

The protein belongs to the PsbB/PsbC family. PsbB subfamily. As to quaternary structure, PSII is composed of 1 copy each of membrane proteins PsbA, PsbB, PsbC, PsbD, PsbE, PsbF, PsbH, PsbI, PsbJ, PsbK, PsbL, PsbM, PsbT, PsbX, PsbY, PsbZ, Psb30/Ycf12, at least 3 peripheral proteins of the oxygen-evolving complex and a large number of cofactors. It forms dimeric complexes. Requires Binds multiple chlorophylls. PSII binds additional chlorophylls, carotenoids and specific lipids. as cofactor.

It is found in the plastid. The protein localises to the chloroplast thylakoid membrane. One of the components of the core complex of photosystem II (PSII). It binds chlorophyll and helps catalyze the primary light-induced photochemical processes of PSII. PSII is a light-driven water:plastoquinone oxidoreductase, using light energy to abstract electrons from H(2)O, generating O(2) and a proton gradient subsequently used for ATP formation. This Fagopyrum esculentum subsp. ancestrale (Wild buckwheat) protein is Photosystem II CP47 reaction center protein.